The following is a 1823-amino-acid chain: AF4/FMR2 family member lilli (1823 aa).

Residues 1–41 are compositionally biased toward low complexity; the sequence is MAQQQQQQHQQQQHHQQQQQQLQQQQQLLQYNNNSYNLNYN. Disordered stretches follow at residues 1–87, 126–305, 422–544, 570–626, 686–712, 753–1057, 1071–1287, 1322–1350, 1413–1448, 1480–1531, 1547–1567, and 1715–1744; these read MAQQ…DPEI, GFGS…ENHI, QQLT…KKKY, AGPG…WHLS, DSRH…YGVG, PKNQ…DIPT, AAAQ…LKPR, ARQH…GART, FMLK…AEQL, ENSA…AIAS, TCSE…APRL, and GNTP…IVPQ. Basic and acidic residues predominate over residues 53-79; sequence REKYERQQGIQSDDRETSLFGEPRRLN. Composition is skewed to low complexity over residues 126–147, 156–174, and 205–249; these read GFGS…SSAS, QQQQ…QQQQ, and PSSS…TSSP. A compositionally biased stretch (pro residues) spans 426-438; sequence PTPPKASPTPPVI. The residue at position 434 (Thr-434) is a Phosphothreonine. Basic and acidic residues predominate over residues 441–454; that stretch reads LKTEKNHSLEKQDS. The segment covering 456–466 has biased composition (acidic residues); sequence LENDLELSESD. Residues Ser-463 and Ser-465 each carry the phosphoserine modification. A compositionally biased stretch (low complexity) spans 475-531; that stretch reads SAGNSSNSSESDSSESGSEASSKGDPQQQQQQQQQHLLHQQQQHQQQQLLLQQQQQQ. Over residues 582–598 the composition is skewed to gly residues; it reads AAGGVGSGSGSTGGGSS. Low complexity predominate over residues 599 to 612; sequence SSGMGTMSSSNSSN. The segment covering 764–785 has biased composition (low complexity); it reads SDSGSGSSGSGSSSSDSAGGSS. Residues 818–827 show a composition bias toward polar residues; that stretch reads HKAQPNSVTL. Over residues 839-849 the composition is skewed to basic residues; it reads PRQKKPRKKKM. Phosphoserine occurs at positions 859 and 860. 5 stretches are compositionally biased toward low complexity: residues 877-906, 917-947, 962-979, 1002-1057, and 1102-1161; these read AATA…AAPA, QAQQ…SSQA, GTAS…VAAG, AAMA…DIPT, and NSSN…QLLQ. A DNA-binding region (a.T hook) is located at residues 908–920; sequence KKGRGRPRKQAQQ. Phosphoserine is present on residues Ser-939 and Ser-941. Residues 1172-1181 show a composition bias toward polar residues; the sequence is TLKQSAQQRL. Low complexity-rich tracts occupy residues 1182–1203 and 1253–1280; these read SSSD…ASSS and QQQQ…QQQQ. Residues 1334-1344 are compositionally biased toward polar residues; it reads TQQNGHLSSRS. The span at 1480–1496 shows a compositional bias: polar residues; the sequence is ENSANASPNKLQQQNAR. Ser-1486 carries the post-translational modification Phosphoserine. Positions 1497–1531 are enriched in low complexity; that stretch reads QLPLSQSQLQHQHQHQHQLQQQQSQSTATGHAIAS. Residues 1555-1565 show a composition bias toward pro residues; that stretch reads TPPPAAPPPAP. Positions 1715-1735 are enriched in low complexity; sequence GNTPSSISPSNSVGSQGSGSN.

It belongs to the AF4 family.

The protein resides in the nucleus. Functionally, has a role in transcriptional regulation. Acts in parallel with the Ras/MAPK and the PI3K/PKB pathways in the control of cell identity and cellular growth. Essential for regulation of the cytoskeleton and cell growth but not for cell proliferation or growth rate. Required specifically for the microtubule-based basal transport of lipid droplets. Plays a partially redundant function downstream of Raf in cell fate specification in the developing eye. Pair-rule protein that regulates embryonic cellularization, gastrulation and segmentation. This Drosophila virilis (Fruit fly) protein is AF4/FMR2 family member lilli.